Reading from the N-terminus, the 393-residue chain is Elongation factor Tu (393 aa).

Positions 10 to 202 (KPHVNIGTIG…AVDEYIPTPE (193 aa)) constitute a tr-type G domain. A G1 region spans residues 19-26 (GHVDHGKT). A GTP-binding site is contributed by 19 to 26 (GHVDHGKT). Threonine 26 serves as a coordination point for Mg(2+). A G2 region spans residues 60 to 64 (GITIN). The interval 81–84 (DCPG) is G3. Residues 81 to 85 (DCPGH) and 136 to 139 (NKAD) contribute to the GTP site. The G4 stretch occupies residues 136–139 (NKAD). Residues 174 to 176 (SAL) are G5.

This sequence belongs to the TRAFAC class translation factor GTPase superfamily. Classic translation factor GTPase family. EF-Tu/EF-1A subfamily. In terms of assembly, monomer.

The protein localises to the cytoplasm. It catalyses the reaction GTP + H2O = GDP + phosphate + H(+). Its function is as follows. GTP hydrolase that promotes the GTP-dependent binding of aminoacyl-tRNA to the A-site of ribosomes during protein biosynthesis. In Clostridium novyi (strain NT), this protein is Elongation factor Tu.